The chain runs to 312 residues: Ribosomal protein L11 methyltransferase (312 aa).

S-adenosyl-L-methionine-binding residues include T160, G181, D203, and N248.

Belongs to the methyltransferase superfamily. PrmA family.

It localises to the cytoplasm. It carries out the reaction L-lysyl-[protein] + 3 S-adenosyl-L-methionine = N(6),N(6),N(6)-trimethyl-L-lysyl-[protein] + 3 S-adenosyl-L-homocysteine + 3 H(+). Methylates ribosomal protein L11. This Fusobacterium nucleatum subsp. nucleatum (strain ATCC 25586 / DSM 15643 / BCRC 10681 / CIP 101130 / JCM 8532 / KCTC 2640 / LMG 13131 / VPI 4355) protein is Ribosomal protein L11 methyltransferase.